A 174-amino-acid polypeptide reads, in one-letter code: Guided entry of tail-anchored proteins factor 1 (174 aa).

The Lumenal segment spans residues 1-8 (MSSAAADH). A helical membrane pass occupies residues 9-29 (WAWLLVLSFVFGCNVLRILLP). Topologically, residues 30-99 (SFSSFMSRVL…VKARTAQLAK (70 aa)) are cytoplasmic. A coiled-coil region spans residues 39–94 (LQKDAEQESQMRAEIQDMKQELSTVNMMDEFARYARLERKINKMTDKLKTHVKART). The tract at residues 39–97 (LQKDAEQESQMRAEIQDMKQELSTVNMMDEFARYARLERKINKMTDKLKTHVKARTAQL) is interaction with GET3/TRC40. Residues 100–120 (IKWVISVAFYVLQAALMISLI) traverse the membrane as a helical segment. The Lumenal portion of the chain corresponds to 121–148 (WKYYSVPVAVVPSKWITPLDRLVAFPTR). The helical transmembrane segment at 149-169 (VAGGVGITCWILVCNKVVAIV) threads the bilayer. The Cytoplasmic segment spans residues 170–174 (LHPFS).

It belongs to the WRB/GET1 family. Component of the Golgi to ER traffic (GET) complex, which is composed of GET1/WRB, CAMLG/GET2 and GET3/TRC40. Within the complex, GET1 and CAMLG form a heterotetramer which is stabilized by phosphatidylinositol binding and which binds to the GET3 homodimer. Interacts with CAMLG (via C-terminus). GET3 shows a higher affinity for CAMLG than for GET1.

The protein resides in the endoplasmic reticulum membrane. Required for the post-translational delivery of tail-anchored (TA) proteins to the endoplasmic reticulum (ER). Together with CAMLG/GET2, acts as a membrane receptor for soluble GET3/TRC40, which recognizes and selectively binds the transmembrane domain of TA proteins in the cytosol. Required to ensure correct topology and ER insertion of CAMLG. The polypeptide is Guided entry of tail-anchored proteins factor 1 (Homo sapiens (Human)).